The sequence spans 1009 residues: Protein naked cuticle (1009 aa).

2 stretches are compositionally biased toward polar residues: residues 68-83 and 121-130; these read IITT…ASNK and LPQDMSSSGS. The disordered stretch occupies residues 68–166; sequence IITTPPGNAS…QQQTAAAATG (99 aa). Positions 152–166 are enriched in low complexity; it reads QQQQQQQQTAAAATG. The interval 206-282 is interaction with dsh; the sequence is EFTCDVSVEG…TVSPEGKSKS (77 aa). Positions 217-253 constitute an EF-hand domain; the sequence is KSSQPLQFSFTFYDLDGHHGKITKDDIVGIVYTIYES. Disordered regions lie at residues 328 to 433, 456 to 479, and 515 to 580; these read MSKQ…QQQL, AGNE…RQQD, and GNDS…QQQR. Residues 349-359 show a composition bias toward basic residues; the sequence is RRQHRYRPRKL. Basic and acidic residues predominate over residues 370–387; it reads NSEKEKERERERERESHA. Over residues 403–414 the composition is skewed to basic residues; that stretch reads KSHHHHHHHGRY. Polar residues predominate over residues 515–525; that stretch reads GNDSGNWQNRH. Low complexity-rich tracts occupy residues 526–535 and 570–580; these read LQQSLQQQPQ and HQQLQQQQQQR. The required for nuclear localization and inhibition of Wnt signaling stretch occupies residues 584–613; it reads ECWKSALNRNDLISIIRESMEKNRLCFQLN. 4 disordered regions span residues 619–662, 773–799, 835–899, and 955–982; these read NVSP…SPLS, SAAH…HNQK, LQQK…SAGS, and TESG…LDTS. 2 stretches are compositionally biased toward low complexity: residues 624–638 and 653–662; these read RQPA…QRQR and SPAAPQSPLS. Residues 843–857 are compositionally biased toward basic residues; it reads RRHRHKQQQQQHHHQ. Residues 858 to 875 are compositionally biased toward low complexity; the sequence is QQQQQQQQQNQQQQQQQQ. The span at 968-979 shows a compositional bias: acidic residues; sequence EADEGQEQEVEL.

It belongs to the NKD family. As to quaternary structure, interacts with dsh.

The protein localises to the cell membrane. It localises to the cytoplasm. The protein resides in the nucleus. In terms of biological role, cell autonomous antagonist of the canonical Wnt signaling pathway. May activate a second Wnt signaling pathway that controls planar cell polarity. Required for neuroblast specification. In Drosophila pseudoobscura pseudoobscura (Fruit fly), this protein is Protein naked cuticle.